Consider the following 940-residue polypeptide: UvrABC system protein A (940 aa).

32–39 lines the ATP pocket; sequence GLSGSGKS. Residues 252-279 form a C4-type zinc finger; that stretch reads CIDCGISIDEISPRLFSFNSPFGKCDYC. 2 ABC transporter domains span residues 309 to 589 and 609 to 937; these read WANT…EGSL and SNGK…HYLK. 641–648 provides a ligand contact to ATP; sequence GVSGSGKS. The C4-type zinc-finger motif lies at 740–766; it reads CEACKGDGIIKIEMQFLSDVYVPCEIC.

This sequence belongs to the ABC transporter superfamily. UvrA family. As to quaternary structure, forms a heterotetramer with UvrB during the search for lesions.

It localises to the cytoplasm. Its function is as follows. The UvrABC repair system catalyzes the recognition and processing of DNA lesions. UvrA is an ATPase and a DNA-binding protein. A damage recognition complex composed of 2 UvrA and 2 UvrB subunits scans DNA for abnormalities. When the presence of a lesion has been verified by UvrB, the UvrA molecules dissociate. This is UvrABC system protein A from Clostridium tetani (strain Massachusetts / E88).